Reading from the N-terminus, the 761-residue chain is Ribonucleoside-diphosphate reductase subunit alpha (761 aa).

The region spanning 5–95 (LFVTKRNGKI…IFHLRKKAFG (91 aa)) is the ATP-cone domain. ATP-binding positions include K9, 15–21 (ELINLDK), T55, and K91. T209 contacts GDP. A disulfide bridge links C225 with C462. DTTP contacts are provided by residues 232 to 234 (DNL), R262, and R269. N437 lines the GDP pocket. The active-site Proton acceptor is N437. C439 acts as the Cysteine radical intermediate in catalysis. GDP contacts are provided by residues E441 and 623 to 625 (ETS). The Proton acceptor role is filled by E441.

Belongs to the ribonucleoside diphosphate reductase large chain family. As to quaternary structure, tetramer of two alpha and two beta subunits.

It carries out the reaction a 2'-deoxyribonucleoside 5'-diphosphate + [thioredoxin]-disulfide + H2O = a ribonucleoside 5'-diphosphate + [thioredoxin]-dithiol. Its activity is regulated as follows. Under complex allosteric control mediated by deoxynucleoside triphosphates and ATP binding to separate specificity and activation sites on the alpha subunit. The type of nucleotide bound at the specificity site determines substrate preference. It seems probable that ATP makes the enzyme reduce CDP and UDP, dGTP favors ADP reduction and dTTP favors GDP reduction. Stimulated by ATP and inhibited by dATP binding to the activity site. Provides the precursors necessary for DNA synthesis. Catalyzes the biosynthesis of deoxyribonucleotides from the corresponding ribonucleotides. This is Ribonucleoside-diphosphate reductase subunit alpha (nrdA) from Buchnera aphidicola subsp. Baizongia pistaciae (strain Bp).